The sequence spans 205 residues: Small ribosomal subunit protein uS4 (205 aa).

Over residues 1–16 the composition is skewed to basic and acidic residues; it reads MSKRESSKYKIDRRMG. Positions 1-46 are disordered; that stretch reads MSKRESSKYKIDRRMGENIWGRPKSPVNRREYGPGQHGQRRKGKLS. An S4 RNA-binding domain is found at 94–157; the sequence is SRLDAIVYRA…KQLVIVLESV (64 aa).

The protein belongs to the universal ribosomal protein uS4 family. In terms of assembly, part of the 30S ribosomal subunit. Contacts protein S5. The interaction surface between S4 and S5 is involved in control of translational fidelity.

One of the primary rRNA binding proteins, it binds directly to 16S rRNA where it nucleates assembly of the body of the 30S subunit. Functionally, with S5 and S12 plays an important role in translational accuracy. This is Small ribosomal subunit protein uS4 from Rhizobium rhizogenes (strain K84 / ATCC BAA-868) (Agrobacterium radiobacter).